The sequence spans 295 residues: 33 kDa chaperonin (295 aa).

2 disulfides stabilise this stretch: Cys-238–Cys-240 and Cys-271–Cys-274.

It belongs to the HSP33 family. Post-translationally, under oxidizing conditions two disulfide bonds are formed involving the reactive cysteines. Under reducing conditions zinc is bound to the reactive cysteines and the protein is inactive.

The protein resides in the cytoplasm. In terms of biological role, redox regulated molecular chaperone. Protects both thermally unfolding and oxidatively damaged proteins from irreversible aggregation. Plays an important role in the bacterial defense system toward oxidative stress. The polypeptide is 33 kDa chaperonin (Clostridium botulinum (strain Alaska E43 / Type E3)).